The following is a 304-amino-acid chain: Cell surface-binding protein OPG105 (304 aa).

Residues 1-235 (MPQQLSPINI…NDDTQVYYSG (235 aa)) form the Alpha-carbonic anhydrase domain. Residues 1–275 (MPQQLSPINI…YQKYIEENKT (275 aa)) lie on the Virion surface side of the membrane. The helical transmembrane segment at 276–294 (FAIIAIVFVFILTAILFFM) threads the bilayer. Topologically, residues 295–304 (SRRYSREKQN) are intravirion.

Belongs to the alpha-carbonic anhydrase family. In terms of assembly, homodimer; disulfide-linked. In terms of processing, apparently non-glycosylated.

The protein resides in the virion membrane. Binds to chondroitin sulfate on the cell surface to provide virion attachment to target cell. In Bos taurus (Bovine), this protein is Cell surface-binding protein OPG105 (OPG105).